Here is a 757-residue protein sequence, read N- to C-terminus: Xaa-Pro dipeptidyl-peptidase (757 aa).

Active-site charge relay system residues include Ser348, Asp468, and His498.

The protein belongs to the peptidase S15 family. Homodimer.

It is found in the cytoplasm. The catalysed reaction is Hydrolyzes Xaa-Pro-|- bonds to release unblocked, N-terminal dipeptides from substrates including Ala-Pro-|-p-nitroanilide and (sequentially) Tyr-Pro-|-Phe-Pro-|-Gly-Pro-|-Ile.. Removes N-terminal dipeptides sequentially from polypeptides having unsubstituted N-termini provided that the penultimate residue is proline. This is Xaa-Pro dipeptidyl-peptidase from Streptococcus pneumoniae (strain Hungary19A-6).